The primary structure comprises 330 residues: MHPQQLVVSWFSLVLLASPIMAIWELEKNVYVVELDWYPDAPGETVVLTCDTPEEDGITWTSDHSSEVLGSGKTLTIQVKEFGDAGQYTCHKGGEVLSHSLLLLHKKEDGVWSTDILKKDQKEPKSKTFLKCEAKNYSGHFTCWWLTAVSTDLKFSVKSSRGSSDPRGVTCGAATLSAERVGVEHRDSWKYTVECQEGSSCPAAEESLPIELVVEAVHKLKYENYSSSFFIRDIIRPDPPKNLQLKPLKNSRHVEVSWEYPDTWSTPHSYFSLTFCVQVQGKHKREKKDKLFVDQTSAKVTCPKDASIRVQARDRYYSSSWSEWASVSCS.

Positions 1–22 (MHPQQLVVSWFSLVLLASPIMA) are cleaved as a signal peptide. Residues 23–106 (IWELEKNVYV…LSHSLLLLHK (84 aa)) enclose the Ig-like C2-type domain. Cysteines 50 and 90 form a disulfide. Asn-136 and Asn-224 each carry an N-linked (GlcNAc...) asparagine glycan. Residues 239–330 (PPKNLQLKPL…WSEWASVSCS (92 aa)) enclose the Fibronectin type-III domain.

The protein belongs to the IL-12B family. In terms of assembly, heterodimer with IL12A; disulfide-linked. The heterodimer is known as interleukin IL-12. Heterodimer with IL23A; disulfide-linked. The heterodimer is known as interleukin IL-23. Also secreted as a monomer. Interacts with NBR1; this interaction promotes IL-12 secretion.

Its subcellular location is the secreted. In terms of biological role, cytokine that can act as a growth factor for activated T and NK cells, enhance the lytic activity of NK/lymphokine-activated killer cells, and stimulate the production of IFN-gamma by resting PBMC. Functionally, associates with IL23A to form the IL-23 interleukin, a heterodimeric cytokine which functions in innate and adaptive immunity. IL-23 may constitute with IL-17 an acute response to infection in peripheral tissues. IL-23 binds to a heterodimeric receptor complex composed of IL12RB1 and IL23R, activates the Jak-Stat signaling cascade, stimulates memory rather than naive T-cells and promotes production of pro-inflammatory cytokines. IL-23 induces autoimmune inflammation and thus may be responsible for autoimmune inflammatory diseases and may be important for tumorigenesis. The sequence is that of Interleukin-12 subunit beta (IL12B) from Lama glama (Llama).